A 125-amino-acid polypeptide reads, in one-letter code: Fatty acid-binding protein, liver-type (125 aa).

This sequence belongs to the calycin superfamily. Fatty-acid binding protein (FABP) family.

The protein localises to the cytoplasm. The protein is Fatty acid-binding protein, liver-type (fabp1) of Takifugu rubripes (Japanese pufferfish).